The chain runs to 360 residues: Phospho-N-acetylmuramoyl-pentapeptide-transferase (360 aa).

A run of 10 helical transmembrane segments spans residues 27–47 (IVSL…LIAW), 72–92 (PTMG…MWAY), 94–114 (SNPY…VGFI), 132–152 (WKYF…YSIG), 168–188 (IMPQ…VGTS), 199–219 (GLAI…AWAT), 236–256 (AGEL…FLWF), 263–283 (VFMG…IAVL), 288–308 (FLLV…ILQV), and 338–358 (VIVR…ATLK).

This sequence belongs to the glycosyltransferase 4 family. MraY subfamily. The cofactor is Mg(2+).

Its subcellular location is the cell inner membrane. The catalysed reaction is UDP-N-acetyl-alpha-D-muramoyl-L-alanyl-gamma-D-glutamyl-meso-2,6-diaminopimeloyl-D-alanyl-D-alanine + di-trans,octa-cis-undecaprenyl phosphate = di-trans,octa-cis-undecaprenyl diphospho-N-acetyl-alpha-D-muramoyl-L-alanyl-D-glutamyl-meso-2,6-diaminopimeloyl-D-alanyl-D-alanine + UMP. It functions in the pathway cell wall biogenesis; peptidoglycan biosynthesis. Functionally, catalyzes the initial step of the lipid cycle reactions in the biosynthesis of the cell wall peptidoglycan: transfers peptidoglycan precursor phospho-MurNAc-pentapeptide from UDP-MurNAc-pentapeptide onto the lipid carrier undecaprenyl phosphate, yielding undecaprenyl-pyrophosphoryl-MurNAc-pentapeptide, known as lipid I. In Yersinia pseudotuberculosis serotype O:1b (strain IP 31758), this protein is Phospho-N-acetylmuramoyl-pentapeptide-transferase.